Consider the following 703-residue polypeptide: Polyribonucleotide nucleotidyltransferase (703 aa).

Residues Asp485 and Asp491 each contribute to the Mg(2+) site. The region spanning Pro552 to Ile611 is the KH domain. The region spanning Gly621–Lys689 is the S1 motif domain.

This sequence belongs to the polyribonucleotide nucleotidyltransferase family. Component of the RNA degradosome, which is a multiprotein complex involved in RNA processing and mRNA degradation. Mg(2+) is required as a cofactor.

Its subcellular location is the cytoplasm. It carries out the reaction RNA(n+1) + phosphate = RNA(n) + a ribonucleoside 5'-diphosphate. Involved in mRNA degradation. Catalyzes the phosphorolysis of single-stranded polyribonucleotides processively in the 3'- to 5'-direction. In Pseudoalteromonas atlantica (strain T6c / ATCC BAA-1087), this protein is Polyribonucleotide nucleotidyltransferase.